Reading from the N-terminus, the 67-residue chain is Potassium channel toxin alpha-KTx (67 aa).

The first 25 residues, 1 to 25, serve as a signal peptide directing secretion; the sequence is MKNIAMKTTVVLTILLLSVLTAINA. A propeptide spanning residues 26–31 is cleaved from the precursor; that stretch reads DTMKKR. 4 cysteine pairs are disulfide-bonded: C35–C54, C40–C59, C44–C61, and C49–C64.

The protein belongs to the short scorpion toxin superfamily. Potassium channel inhibitor family. Expressed by the venom gland.

The protein resides in the secreted. Blocks Kv1.1/KCNA1, Kv1.2/KCNA2 and Kv1.3/KCNA3 voltage-gated potassium channels. This chain is Potassium channel toxin alpha-KTx, found in Hoffmannihadrurus gertschi (Scorpion).